Reading from the N-terminus, the 250-residue chain is Cyclin-Q (250 aa).

An N-acetylmethionine modification is found at methionine 1. A compositionally biased stretch (basic and acidic residues) spans 1 to 10 (MEAVRPDSCE). The tract at residues 1–22 (MEAVRPDSCERGTAAARAEERP) is disordered.

The protein belongs to the cyclin family. Cyclin-like FAM58 subfamily. As to quaternary structure, associates with CDK10 to promote its kinase activity.

Functionally, activating cyclin for the cyclin-associated kinase CDK10. This chain is Cyclin-Q (Ccnq), found in Rattus norvegicus (Rat).